The sequence spans 99 residues: Signal recognition particle 19 kDa protein (99 aa).

It belongs to the SRP19 family. Part of the signal recognition particle protein translocation system, which is composed of SRP and FtsY. Archaeal SRP consists of a 7S RNA molecule of 300 nucleotides and two protein subunits: SRP54 and SRP19.

Its subcellular location is the cytoplasm. In terms of biological role, involved in targeting and insertion of nascent membrane proteins into the cytoplasmic membrane. Binds directly to 7S RNA and mediates binding of the 54 kDa subunit of the SRP. In Ignicoccus hospitalis (strain KIN4/I / DSM 18386 / JCM 14125), this protein is Signal recognition particle 19 kDa protein.